A 122-amino-acid polypeptide reads, in one-letter code: Large ribosomal subunit protein uL14 (122 aa).

It belongs to the universal ribosomal protein uL14 family. In terms of assembly, part of the 50S ribosomal subunit. Forms a cluster with proteins L3 and L19. In the 70S ribosome, L14 and L19 interact and together make contacts with the 16S rRNA in bridges B5 and B8.

Binds to 23S rRNA. Forms part of two intersubunit bridges in the 70S ribosome. This chain is Large ribosomal subunit protein uL14, found in Lactobacillus delbrueckii subsp. bulgaricus (strain ATCC BAA-365 / Lb-18).